We begin with the raw amino-acid sequence, 325 residues long: Transcription initiation factor IIB 2 (325 aa).

A compositionally biased stretch (polar residues) spans 1–13 (MSDSTIRTYSSDQ). The segment at 1 to 29 (MSDSTIRTYSSDQRQTDNDETVSTPDEDV) is disordered. The TFIIB-type zinc-finger motif lies at 28 to 58 (DVLTCPECGGQVIDDEEHGESVCVDCGLVVE). Zn(2+)-binding residues include Cys-32, Cys-35, Cys-50, and Cys-53. Residues 73–93 (STEKDEKSRVGAPTTNMMHDK) are disordered. Repeat copies occupy residues 144 to 227 (GEIE…VREL) and 238 to 319 (QYVP…ELLE).

Belongs to the TFIIB family.

Stabilizes TBP binding to an archaeal box-A promoter. Also responsible for recruiting RNA polymerase II to the pre-initiation complex (DNA-TBP-TFIIB). The chain is Transcription initiation factor IIB 2 from Halobacterium salinarum (strain ATCC 700922 / JCM 11081 / NRC-1) (Halobacterium halobium).